The sequence spans 1035 residues: DNA polymerase I B, mitochondrial (1035 aa).

The N-terminal 42 residues, 1–42, are a transit peptide targeting the mitochondrion; the sequence is MAVAPPLPPAPARLLRRWQGSSPWLSSSFGRTRYFSRPAFAA. A disordered region spans residues 100–124; that stretch reads TNGTTPLRVGNLRHDPSEDIRSSNY. Over residues 111 to 120 the composition is skewed to basic and acidic residues; it reads LRHDPSEDIR. The 3'-5' exonuclease domain maps to 317–478; the sequence is FGNGKTCIWV…LYESLKNKLE (162 aa). A polymerase region spans residues 699–1032; the sequence is HAIAALCEVF…VDAKYAKSWY (334 aa).

This sequence belongs to the DNA polymerase type-A family.

It is found in the mitochondrion. It catalyses the reaction DNA(n) + a 2'-deoxyribonucleoside 5'-triphosphate = DNA(n+1) + diphosphate. With respect to regulation, not inhibited by aphidicolin. Functionally, in addition to polymerase activity, this DNA polymerase exhibits 5'-3' exonuclease activity. May be required for DNA replication and accumulation in mitochondria. This is DNA polymerase I B, mitochondrial from Oryza sativa subsp. japonica (Rice).